Here is a 352-residue protein sequence, read N- to C-terminus: Peptide chain release factor 1 (352 aa).

N5-methylglutamine is present on Q233. A disordered region spans residues 288–309 (NAKDRKEQVGSGDRSERIRTYN). Basic and acidic residues predominate over residues 289–306 (AKDRKEQVGSGDRSERIR).

It belongs to the prokaryotic/mitochondrial release factor family. In terms of processing, methylated by PrmC. Methylation increases the termination efficiency of RF1.

It is found in the cytoplasm. Functionally, peptide chain release factor 1 directs the termination of translation in response to the peptide chain termination codons UAG and UAA. In Helicobacter pylori (strain J99 / ATCC 700824) (Campylobacter pylori J99), this protein is Peptide chain release factor 1 (prfA).